We begin with the raw amino-acid sequence, 212 residues long: 2,3-bisphosphoglycerate-dependent phosphoglycerate mutase (212 aa).

Residues 9 to 16 (RHGQSEWN), 22 to 23 (TG), Arg61, 88 to 91 (ERDY), Lys99, 115 to 116 (RR), and 159 to 160 (GN) each bind substrate. The active-site Tele-phosphohistidine intermediate is His10. Glu88 acts as the Proton donor/acceptor in catalysis.

Belongs to the phosphoglycerate mutase family. BPG-dependent PGAM subfamily. As to quaternary structure, homodimer.

It carries out the reaction (2R)-2-phosphoglycerate = (2R)-3-phosphoglycerate. It functions in the pathway carbohydrate degradation; glycolysis; pyruvate from D-glyceraldehyde 3-phosphate: step 3/5. Functionally, catalyzes the interconversion of 2-phosphoglycerate and 3-phosphoglycerate. This is 2,3-bisphosphoglycerate-dependent phosphoglycerate mutase from Methylorubrum extorquens (strain CM4 / NCIMB 13688) (Methylobacterium extorquens).